Consider the following 181-residue polypeptide: Regulator of G-protein signaling 10 (181 aa).

The disordered stretch occupies residues 1–35 (MFTRAVSRLSRKRPPSDIHDGDGSSSSGHQSLKST). Ser-24 and Ser-41 each carry phosphoserine. The 116-residue stretch at 41–156 (SLENLLEDPE…LKSDLFLKPK (116 aa)) folds into the RGS domain. Cys-74 carries the S-palmitoyl cysteine lipid modification. The tract at residues 155 to 181 (PKRTEEEEEEPPDAQTAAKRASRIYNT) is disordered. Ser-176 carries the post-translational modification Phosphoserine.

In terms of assembly, interacts with GNAZ, GNAI1 and GNAI3. Associates specifically with the activated, GTP-bound forms of GNAZ and GNAI3.

It is found in the cytoplasm. It localises to the cytosol. The protein localises to the nucleus. Its function is as follows. Regulates G protein-coupled receptor signaling cascades, including signaling downstream of the muscarinic acetylcholine receptor CHRM2. Inhibits signal transduction by increasing the GTPase activity of G protein alpha subunits, thereby driving them into their inactive GDP-bound form. Modulates the activity of potassium channels that are activated in response to CHRM2 signaling. Activity on GNAZ is inhibited by palmitoylation of the G-protein. The chain is Regulator of G-protein signaling 10 (Rgs10) from Mus musculus (Mouse).